A 289-amino-acid chain; its full sequence is NFU1 iron-sulfur cluster scaffold homolog, mitochondrial (289 aa).

The transit peptide at methionine 1–threonine 56 directs the protein to the mitochondrion. Residues isoleucine 183–valine 251 are nifU. Cysteine 220 and cysteine 223 together coordinate [4Fe-4S] cluster. Positions glutamate 267–asparagine 289 are disordered.

This sequence belongs to the NifU family.

Its subcellular location is the mitochondrion. In terms of biological role, molecular scaffold for [Fe-S] cluster assembly of mitochondrial iron-sulfur proteins. This Drosophila willistoni (Fruit fly) protein is NFU1 iron-sulfur cluster scaffold homolog, mitochondrial.